The sequence spans 335 residues: UPF0353 protein Mflv_3659 (335 aa).

Helical transmembrane passes span 18-38 (WFFL…VVQL) and 67-87 (LPAV…AGPT). A VWFA domain is found at 98–294 (VVMLVIDVSQ…EQLKQVFTNL (197 aa)). The chain crosses the membrane as a helical span at residues 309–329 (VGWLRLGAGVLALAALGALLI).

The protein belongs to the UPF0353 family.

The protein resides in the cell membrane. The protein is UPF0353 protein Mflv_3659 of Mycolicibacterium gilvum (strain PYR-GCK) (Mycobacterium gilvum (strain PYR-GCK)).